Consider the following 222-residue polypeptide: Large ribosomal subunit protein uL4 (222 aa).

The interval 50 to 72 (TRGRSEVSHSTRKPFRQKGTGNA) is disordered.

The protein belongs to the universal ribosomal protein uL4 family. Part of the 50S ribosomal subunit.

Its function is as follows. One of the primary rRNA binding proteins, this protein initially binds near the 5'-end of the 23S rRNA. It is important during the early stages of 50S assembly. It makes multiple contacts with different domains of the 23S rRNA in the assembled 50S subunit and ribosome. In terms of biological role, forms part of the polypeptide exit tunnel. The polypeptide is Large ribosomal subunit protein uL4 (Chlamydia muridarum (strain MoPn / Nigg)).